We begin with the raw amino-acid sequence, 355 residues long: Peptide chain release factor 1 (355 aa).

Gln230 bears the N5-methylglutamine mark.

The protein belongs to the prokaryotic/mitochondrial release factor family. Methylated by PrmC. Methylation increases the termination efficiency of RF1.

The protein localises to the cytoplasm. In terms of biological role, peptide chain release factor 1 directs the termination of translation in response to the peptide chain termination codons UAG and UAA. In Geobacter sulfurreducens (strain ATCC 51573 / DSM 12127 / PCA), this protein is Peptide chain release factor 1.